The primary structure comprises 1031 residues: MNTEYAELHCLSNFSFQRGASSARELFDRALRHGYAALAITDECTLAGIVRAWQASKDTGLPLIVGSEMHLENGPKIVLLVENLTGYQALCTLITVARRRAKKGEYRLLLEDFDHLPGGLLAIWLADIEGDAQACLAQGNWLRERFAERLWLGVELHRGADDEQRLADLLALAQSLAIPAVASGDVHMHARGRRALQDTITAIRHHTTVAEAGHLLFANGERHLRSLDALAEHYPDWLLAESLRIARRCTFTFDQLQYEYPHELVPKGQTSTSWLRELTERGIRRRWPRGLSVAARAQVEKELALITEKKFDSYFLTVHDIVEFARSQHILCQGRGSAANSAVCYALGITELNPEKSNLLFERFISKERDEPPDIDVDFEHDRREEVIQYIFRRYGRGRAALTAVASTYHGSGALRDVAKVLGLPPDQINALADAFSRWSDSLPSPERLREYGFDAETPILKRVLALTGELIGFPRHLSQHPGGFVISEHPLDTLVPVENAAMAERTIIQWDKDDLDLVGLLKVDILALGMLSALRRTFDLVHLHRGKQWTLASLPGDDRPTYEMISRADTIGVFQIESRAQMAMLPRLRPEKFYDLVIEVAIVRPGPIQGDMVHPYLRRRNKEEAITYPPKLKSVFERTLGVPLFQEQVMEVAIIAADYTPGEADQLRRAMAAWKRHGGLDPHRERLRTGMLANGYDADFADRIFEQIKGFGSYGFPESHAASFALLTYASCWLKCHEPAAFTCALINSWPMGFYSPDQLLQDARRHHIEIRPVDVRYSHWDCTLEPLDHPDSTRNLAIRLGLRMLRSFREEDALRIEAARSKRPFADATDLAQRAGLDSRAAEALADSGALRGLIGHRHRARWEVAGVEAQRPLFDDVTSEEVQVTLPLPTVAEDLVADYATLGTTLGPHPLALLRRQLAAKRFRSSQDLLSLENNRTLSVAGLVIGRQRPGTASGVTFVTLEDEFGMVNVVVWRDLAERQRKVLVGSQLLQVFGRLESNNGVRHLIAQRLYDLTPLLTGLEVRSRDFQ.

Belongs to the DNA polymerase type-C family. DnaE2 subfamily.

Its subcellular location is the cytoplasm. It carries out the reaction DNA(n) + a 2'-deoxyribonucleoside 5'-triphosphate = DNA(n+1) + diphosphate. Its function is as follows. DNA polymerase involved in damage-induced mutagenesis and translesion synthesis (TLS). It is not the major replicative DNA polymerase. The protein is Error-prone DNA polymerase of Pseudomonas syringae pv. tomato (strain ATCC BAA-871 / DC3000).